The chain runs to 185 residues: Protein GrpE (185 aa).

Residues 1–37 (MSEEKQTPEQEAEVEAQEEAVQADTEEVTQDEQSAFQ) form a disordered region.

Belongs to the GrpE family. In terms of assembly, homodimer.

It is found in the cytoplasm. Functionally, participates actively in the response to hyperosmotic and heat shock by preventing the aggregation of stress-denatured proteins, in association with DnaK and GrpE. It is the nucleotide exchange factor for DnaK and may function as a thermosensor. Unfolded proteins bind initially to DnaJ; upon interaction with the DnaJ-bound protein, DnaK hydrolyzes its bound ATP, resulting in the formation of a stable complex. GrpE releases ADP from DnaK; ATP binding to DnaK triggers the release of the substrate protein, thus completing the reaction cycle. Several rounds of ATP-dependent interactions between DnaJ, DnaK and GrpE are required for fully efficient folding. This is Protein GrpE from Bacillus pumilus (strain SAFR-032).